The chain runs to 349 residues: Ion-translocating oxidoreductase complex subunit D (349 aa).

The next 3 membrane-spanning stretches (helical) occupy residues 37–57 (AFFGWGTLVQVLLAIIVALSA), 73–90 (LSDNSAMLTAILIGVAIP), and 124–144 (AMAAYVLLLISFPVQMTTWIA). Threonine 185 is subject to FMN phosphoryl threonine. Transmembrane regions (helical) follow at residues 212 to 232 (ATGVGWFWVNLAYLAGGLVLL), 239 to 259 (WHISTGVLAGLFIASSVGFLL), 265 to 285 (GSPLFHLFSGATMLAAFFIAT), 291 to 311 (ATSPRGRIIFGTLIGILVYII), and 315 to 335 (GGYPDAFAFAVLLANLCAPFI).

It belongs to the NqrB/RnfD family. As to quaternary structure, the complex is composed of six subunits: RnfA, RnfB, RnfC, RnfD, RnfE and RnfG. FMN is required as a cofactor.

The protein localises to the cell inner membrane. Functionally, part of a membrane-bound complex that couples electron transfer with translocation of ions across the membrane. The polypeptide is Ion-translocating oxidoreductase complex subunit D (Shewanella sp. (strain W3-18-1)).